Reading from the N-terminus, the 358-residue chain is Ion-translocating oxidoreductase complex subunit D (358 aa).

The next 3 helical transmembrane spans lie at 24–44, 79–99, and 125–145; these read ILAM…GVVL, LTAL…IIII, and IGYV…MPPI. Threonine 186 carries the FMN phosphoryl threonine modification. Transmembrane regions (helical) follow at residues 220–240, 248–268, 271–291, 297–317, and 321–341; these read FAQG…FLIL, IPVA…FTGF, LSAI…FIAT, SITP…VYLI, and GNYP…VPLI.

It belongs to the NqrB/RnfD family. As to quaternary structure, the complex is composed of six subunits: RnfA, RnfB, RnfC, RnfD, RnfE and RnfG. FMN is required as a cofactor.

Its subcellular location is the cell inner membrane. Its function is as follows. Part of a membrane-bound complex that couples electron transfer with translocation of ions across the membrane. The polypeptide is Ion-translocating oxidoreductase complex subunit D (Haemophilus influenzae (strain ATCC 51907 / DSM 11121 / KW20 / Rd)).